The sequence spans 238 residues: Epoxyqueuosine reductase QueH (238 aa).

Residues Cys-43, Cys-44, Cys-129, and Cys-132 each contribute to the [4Fe-4S] cluster site. A disulfide bridge links Cys-211 with Cys-213.

It belongs to the QueH family.

It carries out the reaction epoxyqueuosine(34) in tRNA + AH2 = queuosine(34) in tRNA + A + H2O. Its pathway is tRNA modification; tRNA-queuosine biosynthesis. Functionally, catalyzes the conversion of epoxyqueuosine (oQ) to queuosine (Q), which is a hypermodified base found in the wobble positions of tRNA(Asp), tRNA(Asn), tRNA(His) and tRNA(Tyr). The sequence is that of Epoxyqueuosine reductase QueH from Staphylococcus epidermidis (strain ATCC 12228 / FDA PCI 1200).